The following is a 504-amino-acid chain: MEEFQRYLEPDRFRQHDFLYPLLFREYIYALAHDHGFNSYMLLENIGYDNKSSLLIVKRLITRMYQHNYLMISANDSNQNQFFGYNKNLHSQIISEGFAVIVEIPFSLRLISSFEGAEIVISYKLRSIHSIFPFLEDKLPHLNYTTDVRIPYPIHLEILIQTLRSRVKDASYLHLLRFFLHQYSNWNILIITTKSISIFSKSNPRFFLFLYNSHICQYESIFLFLGNQSSHLRIISSGVLFERLYLHKKIEHFAEVFANDFPVIPCFLKDPFMHYVRYQGKSILASKDTPLLMNKWKYYLVNLWQCHFYVWSHPGRIHINQLSKHSLDFWGYFSSVQLNPSVVRSQMLENSFLINNAPKKLDIIVPIIPLIGSLAKARFCNALGHPISKLTRADLSDFEILNRFLRICRNLSHYYSGSSKKKSMYRIKYILRLSCVKTLARKHKSTARAFLKKVGSEFVQEFFTEEEEFLSLIFPRTSFTLRRLYRGRVWYLDIIFINGLANHE.

Belongs to the intron maturase 2 family. MatK subfamily.

The protein resides in the plastid. It localises to the chloroplast. Functionally, usually encoded in the trnK tRNA gene intron. Probably assists in splicing its own and other chloroplast group II introns. The polypeptide is Maturase K (Fagus hayatae (Formosan elm)).